We begin with the raw amino-acid sequence, 552 residues long: NADH-ubiquinone oxidoreductase chain 5 (552 aa).

The next 15 membrane-spanning stretches (helical) occupy residues 11–31 (PVTI…PFGL), 36–56 (LAMT…AYAI), 68–88 (FYII…SDNY), 89–109 (LMMF…ISFW), 121–141 (SAIL…GLMI), 152–172 (IALV…LLLL), 196–216 (TPVS…YVLV), 229–249 (LLII…IAIV), 256–274 (VIAL…AIGI), 287–307 (HAFF…SFVA), 322–342 (LPFS…IPGL), 365–386 (ILYY…RVLY), 406–426 (SLGM…IGYS), 453–473 (AYIK…LVYV), and 532–552 (SRAV…LFFI).

The protein belongs to the complex I subunit 5 family.

It localises to the mitochondrion inner membrane. The catalysed reaction is a ubiquinone + NADH + 5 H(+)(in) = a ubiquinol + NAD(+) + 4 H(+)(out). Core subunit of the mitochondrial membrane respiratory chain NADH dehydrogenase (Complex I) that is believed to belong to the minimal assembly required for catalysis. Complex I functions in the transfer of electrons from NADH to the respiratory chain. The immediate electron acceptor for the enzyme is believed to be ubiquinone. The protein is NADH-ubiquinone oxidoreductase chain 5 (NAD5) of Candida albicans (strain SC5314 / ATCC MYA-2876) (Yeast).